A 155-amino-acid polypeptide reads, in one-letter code: Altered inheritance rate of mitochondria protein 29 (155 aa).

At serine 78 the chain carries Phosphoserine.

The protein belongs to the UPF0538 family.

Its subcellular location is the cytoplasm. Its function is as follows. May be involved in mitochondrial organization and biogenesis. This chain is Altered inheritance rate of mitochondria protein 29 (AIM29), found in Saccharomyces cerevisiae (strain ATCC 204508 / S288c) (Baker's yeast).